Consider the following 380-residue polypeptide: 1-deoxy-D-xylulose 5-phosphate reductoisomerase (380 aa).

8 residues coordinate NADPH: Thr-10, Gly-11, Ser-12, Ile-13, Gly-36, Arg-37, Asn-38, and Asn-120. Lys-121 is a binding site for 1-deoxy-D-xylulose 5-phosphate. Glu-122 is an NADPH binding site. Position 146 (Asp-146) interacts with Mn(2+). Residues Ser-147, Glu-148, Ser-172, and His-195 each contribute to the 1-deoxy-D-xylulose 5-phosphate site. Glu-148 is a binding site for Mn(2+). Gly-201 provides a ligand contact to NADPH. Residues Ser-208, Asn-213, Lys-214, and Glu-217 each coordinate 1-deoxy-D-xylulose 5-phosphate. Glu-217 serves as a coordination point for Mn(2+).

It belongs to the DXR family. Mg(2+) serves as cofactor. It depends on Mn(2+) as a cofactor.

It carries out the reaction 2-C-methyl-D-erythritol 4-phosphate + NADP(+) = 1-deoxy-D-xylulose 5-phosphate + NADPH + H(+). Its pathway is isoprenoid biosynthesis; isopentenyl diphosphate biosynthesis via DXP pathway; isopentenyl diphosphate from 1-deoxy-D-xylulose 5-phosphate: step 1/6. Its function is as follows. Catalyzes the NADPH-dependent rearrangement and reduction of 1-deoxy-D-xylulose-5-phosphate (DXP) to 2-C-methyl-D-erythritol 4-phosphate (MEP). The sequence is that of 1-deoxy-D-xylulose 5-phosphate reductoisomerase from Listeria monocytogenes serotype 4b (strain F2365).